The primary structure comprises 366 residues: UDP-N-acetylenolpyruvoylglucosamine reductase (366 aa).

The FAD-binding PCMH-type domain occupies 27–197 (LGGPAAGFVV…LRVRFLLRDG (171 aa)). R175 is a catalytic residue. S252 functions as the Proton donor in the catalytic mechanism. E358 is a catalytic residue.

Belongs to the MurB family. It depends on FAD as a cofactor.

It is found in the cytoplasm. The enzyme catalyses UDP-N-acetyl-alpha-D-muramate + NADP(+) = UDP-N-acetyl-3-O-(1-carboxyvinyl)-alpha-D-glucosamine + NADPH + H(+). It participates in cell wall biogenesis; peptidoglycan biosynthesis. Its function is as follows. Cell wall formation. In Saccharopolyspora erythraea (strain ATCC 11635 / DSM 40517 / JCM 4748 / NBRC 13426 / NCIMB 8594 / NRRL 2338), this protein is UDP-N-acetylenolpyruvoylglucosamine reductase.